The sequence spans 158 residues: NADH-quinone oxidoreductase subunit B (158 aa).

4 residues coordinate [4Fe-4S] cluster: C37, C38, C102, and C132.

It belongs to the complex I 20 kDa subunit family. As to quaternary structure, NDH-1 is composed of 14 different subunits. Subunits NuoB, C, D, E, F, and G constitute the peripheral sector of the complex. [4Fe-4S] cluster serves as cofactor.

It localises to the cell inner membrane. The catalysed reaction is a quinone + NADH + 5 H(+)(in) = a quinol + NAD(+) + 4 H(+)(out). In terms of biological role, NDH-1 shuttles electrons from NADH, via FMN and iron-sulfur (Fe-S) centers, to quinones in the respiratory chain. Couples the redox reaction to proton translocation (for every two electrons transferred, four hydrogen ions are translocated across the cytoplasmic membrane), and thus conserves the redox energy in a proton gradient. The protein is NADH-quinone oxidoreductase subunit B of Methylobacillus flagellatus (strain ATCC 51484 / DSM 6875 / VKM B-1610 / KT).